Reading from the N-terminus, the 296-residue chain is 4-hydroxy-tetrahydrodipicolinate synthase (296 aa).

Pyruvate is bound at residue Thr49. The active-site Proton donor/acceptor is the Tyr137. Lys166 serves as the catalytic Schiff-base intermediate with substrate. Ile208 lines the pyruvate pocket.

Belongs to the DapA family. Homotetramer; dimer of dimers.

Its subcellular location is the cytoplasm. The enzyme catalyses L-aspartate 4-semialdehyde + pyruvate = (2S,4S)-4-hydroxy-2,3,4,5-tetrahydrodipicolinate + H2O + H(+). The protein operates within amino-acid biosynthesis; L-lysine biosynthesis via DAP pathway; (S)-tetrahydrodipicolinate from L-aspartate: step 3/4. Functionally, catalyzes the condensation of (S)-aspartate-beta-semialdehyde [(S)-ASA] and pyruvate to 4-hydroxy-tetrahydrodipicolinate (HTPA). The polypeptide is 4-hydroxy-tetrahydrodipicolinate synthase (Chlorobium phaeobacteroides (strain DSM 266 / SMG 266 / 2430)).